A 96-amino-acid chain; its full sequence is Large ribosomal subunit protein bL27 (96 aa).

The segment at 12-33 (HKGGGSSANGRNSAGRRLGAKA) is disordered. Positions 19-28 (ANGRNSAGRR) are enriched in low complexity.

Belongs to the bacterial ribosomal protein bL27 family.

The polypeptide is Large ribosomal subunit protein bL27 (Lactobacillus helveticus (strain DPC 4571)).